Here is a 136-residue protein sequence, read N- to C-terminus: Probable 5-hydroxyisourate hydrolase ZK697.8 (136 aa).

The signal sequence occupies residues 1 to 19 (MIKFLLFLAIAAATVISNA). Substrate is bound by residues histidine 31, arginine 69, and tyrosine 133.

Belongs to the transthyretin family. 5-hydroxyisourate hydrolase subfamily. As to quaternary structure, homotetramer.

The enzyme catalyses 5-hydroxyisourate + H2O = 5-hydroxy-2-oxo-4-ureido-2,5-dihydro-1H-imidazole-5-carboxylate + H(+). Its function is as follows. Catalyzes the hydrolysis of 5-hydroxyisourate (HIU) to 2-oxo-4-hydroxy-4-carboxy-5-ureidoimidazoline (OHCU). The polypeptide is Probable 5-hydroxyisourate hydrolase ZK697.8 (Caenorhabditis elegans).